Consider the following 307-residue polypeptide: Ribonuclease Z (307 aa).

Residues H63, H65, D67, H68, H141, D212, and H270 each coordinate Zn(2+). The active-site Proton acceptor is the D67.

Belongs to the RNase Z family. Homodimer. The cofactor is Zn(2+).

It carries out the reaction Endonucleolytic cleavage of RNA, removing extra 3' nucleotides from tRNA precursor, generating 3' termini of tRNAs. A 3'-hydroxy group is left at the tRNA terminus and a 5'-phosphoryl group is left at the trailer molecule.. In terms of biological role, zinc phosphodiesterase, which displays some tRNA 3'-processing endonuclease activity. Probably involved in tRNA maturation, by removing a 3'-trailer from precursor tRNA. This chain is Ribonuclease Z, found in Bacillus cereus (strain ATCC 10987 / NRS 248).